We begin with the raw amino-acid sequence, 206 residues long: MARYIGPTCKLSRREGTDLFLKSGVRPLESKCKAEAAPGQHGQRRGRLSDYGVQLREKQKVRRIYGVLEKQFRNYYKDAARIKGATGENLLKLLEGRLDNVVYRMGFGSTRAESRQLVSHKAILVNGKTVNIPSFQVNVGDVISVREKSKNQLRIQNSLGIAGQRADVEWVDVNTEKKEGVFKRCPDRADLPAEINENLIVELYSK.

Residues 96–156 (GRLDNVVYRM…EKSKNQLRIQ (61 aa)) form the S4 RNA-binding domain.

Belongs to the universal ribosomal protein uS4 family. Part of the 30S ribosomal subunit. Contacts protein S5. The interaction surface between S4 and S5 is involved in control of translational fidelity.

One of the primary rRNA binding proteins, it binds directly to 16S rRNA where it nucleates assembly of the body of the 30S subunit. In terms of biological role, with S5 and S12 plays an important role in translational accuracy. This Saccharophagus degradans (strain 2-40 / ATCC 43961 / DSM 17024) protein is Small ribosomal subunit protein uS4.